The chain runs to 1442 residues: Trafficking protein particle complex subunit 10 (1442 aa).

A compositionally biased stretch (polar residues) spans 1–23; that stretch reads MSNVSPNSMNLNGSTSSTASVND. Disordered regions lie at residues 1–86, 251–277, 535–564, 1208–1238, 1316–1335, and 1422–1442; these read MSNV…SSSS, TSSG…TSTK, GSSS…NSGI, LSSS…NHSK, QQQQ…QKQQ, and LQDN…TNKT. Low complexity predominate over residues 39-86; sequence SSSSASSISNSNSSSSNNLKPSTQPLSSSSTLNTPTQFSLQHSSSSSS. Positions 535–553 are enriched in low complexity; that stretch reads GSSSSNTPSSTSATTAANG. Residues 554 to 564 show a composition bias toward polar residues; sequence KNTPMPSNSGI. Positions 1208–1236 are enriched in low complexity; it reads LSSSTSPSSATDSSNSNGNNNNNNNNNNH. The span at 1425 to 1442 shows a compositional bias: low complexity; sequence NNNNNNNSINSQTSTNKT.

Belongs to the TMEM1 family. As to quaternary structure, part of the multisubunit TRAPP (transport protein particle) complex.

It localises to the golgi apparatus. The protein localises to the cis-Golgi network. Its function is as follows. May play a role in vesicular transport from endoplasmic reticulum to Golgi. In Dictyostelium discoideum (Social amoeba), this protein is Trafficking protein particle complex subunit 10 (trapcc10-1).